Consider the following 62-residue polypeptide: Large ribosomal subunit protein uL30 (62 aa).

Belongs to the universal ribosomal protein uL30 family. As to quaternary structure, part of the 50S ribosomal subunit.

The chain is Large ribosomal subunit protein uL30 from Paracoccus denitrificans (strain Pd 1222).